The primary structure comprises 210 residues: Thymidylate kinase (210 aa).

Glycine 10–serine 17 is an ATP binding site.

The protein belongs to the thymidylate kinase family.

It carries out the reaction dTMP + ATP = dTDP + ADP. Its function is as follows. Phosphorylation of dTMP to form dTDP in both de novo and salvage pathways of dTTP synthesis. The protein is Thymidylate kinase of Pseudomonas putida (strain ATCC 700007 / DSM 6899 / JCM 31910 / BCRC 17059 / LMG 24140 / F1).